Here is a 397-residue protein sequence, read N- to C-terminus: CCA-adding enzyme (397 aa).

Positions 26 and 29 each coordinate ATP. Residues Gly-26 and Arg-29 each contribute to the CTP site. Mg(2+) contacts are provided by Asp-39 and Asp-41. 5 residues coordinate ATP: Arg-110, Asp-153, Arg-156, Arg-159, and Arg-162. Arg-110, Asp-153, Arg-156, Arg-159, and Arg-162 together coordinate CTP.

It belongs to the tRNA nucleotidyltransferase/poly(A) polymerase family. Bacterial CCA-adding enzyme type 3 subfamily. In terms of assembly, homodimer. The cofactor is Mg(2+).

It carries out the reaction a tRNA precursor + 2 CTP + ATP = a tRNA with a 3' CCA end + 3 diphosphate. It catalyses the reaction a tRNA with a 3' CCA end + 2 CTP + ATP = a tRNA with a 3' CCACCA end + 3 diphosphate. In terms of biological role, catalyzes the addition and repair of the essential 3'-terminal CCA sequence in tRNAs without using a nucleic acid template. Adds these three nucleotides in the order of C, C, and A to the tRNA nucleotide-73, using CTP and ATP as substrates and producing inorganic pyrophosphate. tRNA 3'-terminal CCA addition is required both for tRNA processing and repair. Also involved in tRNA surveillance by mediating tandem CCA addition to generate a CCACCA at the 3' terminus of unstable tRNAs. While stable tRNAs receive only 3'-terminal CCA, unstable tRNAs are marked with CCACCA and rapidly degraded. This chain is CCA-adding enzyme, found in Bacillus thuringiensis subsp. konkukian (strain 97-27).